A 336-amino-acid polypeptide reads, in one-letter code: Transcription initiation factor IIB (336 aa).

The TFIIB-type zinc-finger motif lies at 41-72 (QKLRCPICGNTVFIEDAERGQIVCASCGYVLM). Positions 45, 48, 64, and 67 each coordinate Zn(2+). 2 tandem repeats follow at residues 152-235 (HELN…AREL) and 246-327 (QYVP…ELAK).

The protein belongs to the TFIIB family.

Functionally, stabilizes TBP binding to an archaeal box-A promoter. Also responsible for recruiting RNA polymerase II to the pre-initiation complex (DNA-TBP-TFIIB). The chain is Transcription initiation factor IIB from Caldivirga maquilingensis (strain ATCC 700844 / DSM 13496 / JCM 10307 / IC-167).